A 203-amino-acid polypeptide reads, in one-letter code: Small ribosomal subunit protein uS4c (203 aa).

One can recognise an S4 RNA-binding domain in the interval 91–159 (MRLDNIIFRL…ISKNIEFYQK (69 aa)).

Belongs to the universal ribosomal protein uS4 family. In terms of assembly, part of the 30S ribosomal subunit. Contacts protein S5. The interaction surface between S4 and S5 is involved in control of translational fidelity.

Its subcellular location is the plastid. It localises to the chloroplast. In terms of biological role, one of the primary rRNA binding proteins, it binds directly to 16S rRNA where it nucleates assembly of the body of the 30S subunit. Functionally, with S5 and S12 plays an important role in translational accuracy. This is Small ribosomal subunit protein uS4c (rps4) from Lopidium concinnum (Moss).